The sequence spans 508 residues: Aspartic proteinase yapsin-3 (508 aa).

The first 20 residues, 1 to 20 (MKLQLAAVATLAVLTSPAFG), serve as a signal peptide directing secretion. Residues 21-47 (RVLPDGKYVKIPFTKKKNGDNGELSKR) constitute a propeptide that is removed on maturation. The Peptidase A1 domain maps to 63–394 (YSVELAIGTP…DLDNYEISLA (332 aa)). A glycan (N-linked (GlcNAc...) asparagine) is linked at Asn75. The active site involves Asp81. Asn120, Asn160, Asn163, and Asn275 each carry an N-linked (GlcNAc...) asparagine glycan. Asp288 is a catalytic residue. Residues Asn309, Asn328, Asn367, Asn422, Asn445, and Asn462 are each glycosylated (N-linked (GlcNAc...) asparagine). The segment covering 448 to 468 (STATTTRSTTTKKTNSTTTAK) has biased composition (low complexity). A disordered region spans residues 448–476 (STATTTRSTTTKKTNSTTTAKSTHKSKRA). Asn483 carries GPI-anchor amidated asparagine lipidation. Positions 484 to 508 (SASSIRSTLGLLLVPSLLILSVFFS) are cleaved as a propeptide — removed in mature form.

Belongs to the peptidase A1 family. Post-translationally, can also be processed to start at Phe-54.

The protein localises to the cell membrane. Its function is as follows. Cleaves proteins C-terminally to mono- and paired-basic residues. Required for cell wall integrity. The chain is Aspartic proteinase yapsin-3 (YPS3) from Saccharomyces cerevisiae (strain ATCC 204508 / S288c) (Baker's yeast).